The primary structure comprises 83 residues: Small ribosomal subunit protein uS17 (83 aa).

Belongs to the universal ribosomal protein uS17 family. In terms of assembly, part of the 30S ribosomal subunit.

Functionally, one of the primary rRNA binding proteins, it binds specifically to the 5'-end of 16S ribosomal RNA. The protein is Small ribosomal subunit protein uS17 of Pseudoalteromonas atlantica (strain T6c / ATCC BAA-1087).